The primary structure comprises 372 residues: Envelope phospholipase OPG057 (372 aa).

Residues 153-156 (YPPL) carry the YPPL motif. S-palmitoyl cysteine; by host attachment occurs at residues cysteine 185 and cysteine 186. The region spanning 307–334 (FTIQNNTKLLIVDDEYVHITSANFDGTH) is the PLD phosphodiesterase domain.

This sequence belongs to the orthopoxvirus OPG057 family. In terms of assembly, interacts with protein OPG190/B5. In terms of processing, palmitoylated. Attachment of the palmitate moiety is essential for correct intracellular targeting and protein function.

Its subcellular location is the virion membrane. The protein localises to the host Golgi apparatus. It is found in the host trans-Golgi network. The protein resides in the host endoplasmic reticulum membrane. It carries out the reaction a 1,2-diacyl-sn-glycero-3-phosphocholine + H2O = a 1,2-diacyl-sn-glycero-3-phosphate + choline + H(+). Functionally, major envelope protein that plays a role in the biogenesis of the viral double membrane and in egress of virus from the host cell. Produces the wrapped form of virus that is required for cell-to-cell spread. Acts as a lipase with broad specificity including phospholipase C, phospholipase A, and triacylglycerol lipase activities. In Vaccinia virus (strain Western Reserve) (VACV), this protein is Envelope phospholipase OPG057 (OPG057).